The primary structure comprises 365 residues: Histidinol-phosphate aminotransferase (365 aa).

An N6-(pyridoxal phosphate)lysine modification is found at Lys222.

It belongs to the class-II pyridoxal-phosphate-dependent aminotransferase family. Histidinol-phosphate aminotransferase subfamily. Homodimer. Pyridoxal 5'-phosphate serves as cofactor.

It carries out the reaction L-histidinol phosphate + 2-oxoglutarate = 3-(imidazol-4-yl)-2-oxopropyl phosphate + L-glutamate. The protein operates within amino-acid biosynthesis; L-histidine biosynthesis; L-histidine from 5-phospho-alpha-D-ribose 1-diphosphate: step 7/9. In Geobacillus thermodenitrificans (strain NG80-2), this protein is Histidinol-phosphate aminotransferase.